Reading from the N-terminus, the 164-residue chain is Cytochrome c-type biogenesis protein CcmE (164 aa).

Topologically, residues 1–8 (MNPRRKKR) are cytoplasmic. A helical; Signal-anchor for type II membrane protein membrane pass occupies residues 9–29 (LTLAVALIGGVAAIASLLLYA). At 30–164 (LNSNLNLFFT…EDQSKAGGYK (135 aa)) the chain is on the periplasmic side. Positions 131 and 135 each coordinate heme. Residues 140 to 164 (VAEAMGQSHEKLDYSEDQSKAGGYK) form a disordered region. Positions 147-158 (SHEKLDYSEDQS) are enriched in basic and acidic residues.

This sequence belongs to the CcmE/CycJ family.

Its subcellular location is the cell inner membrane. In terms of biological role, heme chaperone required for the biogenesis of c-type cytochromes. Transiently binds heme delivered by CcmC and transfers the heme to apo-cytochromes in a process facilitated by CcmF and CcmH. This chain is Cytochrome c-type biogenesis protein CcmE, found in Shewanella piezotolerans (strain WP3 / JCM 13877).